Consider the following 498-residue polypeptide: Cytochrome P450 71B5 (498 aa).

A helical membrane pass occupies residues 3–23 (IFLCFLLLLPLSLIFLKKLLP). C439 serves as a coordination point for heme.

It belongs to the cytochrome P450 family. The cofactor is heme.

The protein localises to the membrane. The sequence is that of Cytochrome P450 71B5 (CYP71B5) from Arabidopsis thaliana (Mouse-ear cress).